The following is a 23-amino-acid chain: Aurein-4.3 (23 aa).

It belongs to the frog skin active peptide (FSAP) family. Aurein subfamily. Expressed by the skin dorsal glands.

The protein localises to the secreted. Its function is as follows. Has no antimicrobial or anticancer activity. The polypeptide is Aurein-4.3 (Ranoidea aurea (Green and golden bell frog)).